The chain runs to 411 residues: Phosphoglycerate kinase (411 aa).

Substrate contacts are provided by residues 28 to 30 (DIN), Arg-45, 68 to 71 (HQSR), Arg-125, and Arg-165. ATP is bound by residues Glu-338 and 364 to 367 (GGHL).

This sequence belongs to the phosphoglycerate kinase family. In terms of assembly, homodimer.

The protein resides in the cytoplasm. It catalyses the reaction (2R)-3-phosphoglycerate + ATP = (2R)-3-phospho-glyceroyl phosphate + ADP. It functions in the pathway carbohydrate degradation; glycolysis; pyruvate from D-glyceraldehyde 3-phosphate: step 2/5. The chain is Phosphoglycerate kinase (pgk) from Methanothermobacter thermautotrophicus (strain ATCC 29096 / DSM 1053 / JCM 10044 / NBRC 100330 / Delta H) (Methanobacterium thermoautotrophicum).